We begin with the raw amino-acid sequence, 132 residues long: Transcription antitermination protein NusB (132 aa).

It belongs to the NusB family.

In terms of biological role, involved in transcription antitermination. Required for transcription of ribosomal RNA (rRNA) genes. Binds specifically to the boxA antiterminator sequence of the ribosomal RNA (rrn) operons. The chain is Transcription antitermination protein NusB from Campylobacter jejuni subsp. doylei (strain ATCC BAA-1458 / RM4099 / 269.97).